The sequence spans 79 residues: Acyl carrier protein (79 aa).

A Carrier domain is found at 2-77 (SDIEARVRKI…SAIDYANTHQ (76 aa)). The residue at position 37 (S37) is an O-(pantetheine 4'-phosphoryl)serine.

It belongs to the acyl carrier protein (ACP) family. Post-translationally, 4'-phosphopantetheine is transferred from CoA to a specific serine of apo-ACP by AcpS. This modification is essential for activity because fatty acids are bound in thioester linkage to the sulfhydryl of the prosthetic group.

The protein localises to the cytoplasm. Its pathway is lipid metabolism; fatty acid biosynthesis. Its function is as follows. Carrier of the growing fatty acid chain in fatty acid biosynthesis. This Verminephrobacter eiseniae (strain EF01-2) protein is Acyl carrier protein.